A 228-amino-acid chain; its full sequence is Ribulose-phosphate 3-epimerase (228 aa).

S11 is a substrate binding site. A divalent metal cation is bound by residues H36, D38, and H69. D38 functions as the Proton acceptor in the catalytic mechanism. Substrate contacts are provided by residues H69, 145-148 (GFCG), 180-182 (DGG), and 202-203 (AS). D180 provides a ligand contact to a divalent metal cation. The active-site Proton donor is D180.

Belongs to the ribulose-phosphate 3-epimerase family. Requires a divalent metal cation as cofactor.

It catalyses the reaction D-ribulose 5-phosphate = D-xylulose 5-phosphate. It functions in the pathway carbohydrate degradation. In terms of biological role, catalyzes the reversible epimerization of D-ribulose 5-phosphate to D-xylulose 5-phosphate. This Chlamydia muridarum (strain MoPn / Nigg) protein is Ribulose-phosphate 3-epimerase.